A 467-amino-acid chain; its full sequence is Na(+)/H(+) exchange regulatory cofactor-like protein nrfl-1 (467 aa).

PDZ domains are found at residues R12–E94 and L143–D225. Residues M344–D429 form a disordered region. Positions P407 to G425 are enriched in polar residues.

As to quaternary structure, interacts (via PDZ 2 domain) with aat-6 (via PDZ-binding motif); the interaction sequesters aat-6 to the apical cell membrane of intestinal cells. In terms of processing, phosphorylated. Expressed in the excretory canal and intestine. Expressed on the apical cell membrane of intestinal cells (at protein level).

It localises to the cell projection. It is found in the microvillus membrane. The protein resides in the apical cell membrane. Functionally, scaffold protein that connects plasma membrane proteins with members of the ezrin/moesin/radixin family and thereby helps to link them to the actin cytoskeleton and to regulate their surface expression. Anchors the amino acid transporter protein aat-6 to the apical cell membrane of intestinal cells, particularly in older animals, in order to maintain amino acid homeostasis. May play a role in promoting fertility. In Caenorhabditis elegans, this protein is Na(+)/H(+) exchange regulatory cofactor-like protein nrfl-1.